The chain runs to 55 residues: Metallothionein-1 (55 aa).

This sequence belongs to the metallothionein superfamily. Type 11 family.

The polypeptide is Metallothionein-1 (MTP1) (Yarrowia lipolytica (strain CLIB 122 / E 150) (Yeast)).